A 761-amino-acid polypeptide reads, in one-letter code: Probable beta-galactosidase 2 (761 aa).

An N-terminal signal peptide occupies residues 1–23; sequence MGTIKNNFQLLWLILLIVVLVNG. N-linked (GlcNAc...) asparagine glycosylation is found at Asn39 and Asn110. Glu195 functions as the Proton donor in the catalytic mechanism. Asn206 is a glycosylation site (N-linked (GlcNAc...) asparagine). The active-site Nucleophile is the Glu267. N-linked (GlcNAc...) asparagine glycosylation is found at Asn385, Asn405, Asn438, Asn501, Asn552, Asn553, Asn577, Asn592, Asn642, Asn690, and Asn696.

The protein belongs to the glycosyl hydrolase 35 family.

The catalysed reaction is Hydrolysis of terminal non-reducing beta-D-galactose residues in beta-D-galactosides.. In terms of biological role, cleaves beta-linked terminal galactosyl residues from gangliosides, glycoproteins, and glycosaminoglycans. The protein is Probable beta-galactosidase 2 (glb2) of Dictyostelium discoideum (Social amoeba).